Here is a 238-residue protein sequence, read N- to C-terminus: ATP synthase subunit a (238 aa).

Transmembrane regions (helical) follow at residues 18–38, 76–96, 117–137, 173–193, and 208–230; these read GTTM…TVIG, FIVL…MGIP, VLTL…GIMV, LFGN…LGTT, and WQAF…AMVY.

Belongs to the ATPase A chain family. F-type ATPases have 2 components, CF(1) - the catalytic core - and CF(0) - the membrane proton channel. CF(1) has five subunits: alpha(3), beta(3), gamma(1), delta(1), epsilon(1). CF(0) has three main subunits: a(1), b(2) and c(9-12). The alpha and beta chains form an alternating ring which encloses part of the gamma chain. CF(1) is attached to CF(0) by a central stalk formed by the gamma and epsilon chains, while a peripheral stalk is formed by the delta and b chains.

The protein localises to the cell membrane. Key component of the proton channel; it plays a direct role in the translocation of protons across the membrane. The polypeptide is ATP synthase subunit a (Shouchella clausii (strain KSM-K16) (Alkalihalobacillus clausii)).